The primary structure comprises 811 residues: N-terminal acetyltransferase B complex subunit arm1 (811 aa).

It belongs to the MDM20/NAA25 family. As to quaternary structure, component of the N-terminal acetyltransferase B (NatB) complex.

The protein localises to the cytoplasm. Non-catalytic subunit of the NatB N-terminal acetyltransferase, which catalyzes acetylation of the amino-terminal methionine residues of all proteins beginning with Met-Asp or Met-Glu and of some proteins beginning with Met-Asn or Met-Met. The polypeptide is N-terminal acetyltransferase B complex subunit arm1 (arm1) (Schizosaccharomyces pombe (strain 972 / ATCC 24843) (Fission yeast)).